Reading from the N-terminus, the 491-residue chain is Protein nucleotidyltransferase YdiU (491 aa).

ATP contacts are provided by Gly94, Gly96, Arg97, Lys117, Asp129, Gly130, Arg180, and Arg187. Asp256 (proton acceptor) is an active-site residue. Mg(2+)-binding residues include Asn257 and Asp266. Asp266 contributes to the ATP binding site.

The protein belongs to the SELO family. Mg(2+) is required as a cofactor. Requires Mn(2+) as cofactor.

The catalysed reaction is L-seryl-[protein] + ATP = 3-O-(5'-adenylyl)-L-seryl-[protein] + diphosphate. The enzyme catalyses L-threonyl-[protein] + ATP = 3-O-(5'-adenylyl)-L-threonyl-[protein] + diphosphate. It carries out the reaction L-tyrosyl-[protein] + ATP = O-(5'-adenylyl)-L-tyrosyl-[protein] + diphosphate. It catalyses the reaction L-histidyl-[protein] + UTP = N(tele)-(5'-uridylyl)-L-histidyl-[protein] + diphosphate. The catalysed reaction is L-seryl-[protein] + UTP = O-(5'-uridylyl)-L-seryl-[protein] + diphosphate. The enzyme catalyses L-tyrosyl-[protein] + UTP = O-(5'-uridylyl)-L-tyrosyl-[protein] + diphosphate. In terms of biological role, nucleotidyltransferase involved in the post-translational modification of proteins. It can catalyze the addition of adenosine monophosphate (AMP) or uridine monophosphate (UMP) to a protein, resulting in modifications known as AMPylation and UMPylation. The polypeptide is Protein nucleotidyltransferase YdiU (Clostridium botulinum (strain Loch Maree / Type A3)).